A 284-amino-acid polypeptide reads, in one-letter code: MTAHLIDGKAIAANLRQQIAQRVAERRQQGLRTPGLAVILVGTDPASQVYVSHKRKDCEEVGFISQAFDLPSDTTQQALTDLIDRLNDDPAVDGILLQLPLPAHLDASLLLERIRPDKDVDGFHPYNIGRLAQRIPLLRPCTPKGIMTLLESTGQDLYGMNAVIVGASNIVGRPMAMELLLAGCTVTVCHRFTKDLAGHVGRADLVVVAAGKPGLVKGEWVKEGAIVIDVGINRQEDGKLVGDVVYETALPRAGWITPVPGGVGPMTRACLLENTLYAAEELHK.

Residues 166–168 (GAS) and isoleucine 232 each bind NADP(+).

Belongs to the tetrahydrofolate dehydrogenase/cyclohydrolase family. As to quaternary structure, homodimer.

It carries out the reaction (6R)-5,10-methylene-5,6,7,8-tetrahydrofolate + NADP(+) = (6R)-5,10-methenyltetrahydrofolate + NADPH. The catalysed reaction is (6R)-5,10-methenyltetrahydrofolate + H2O = (6R)-10-formyltetrahydrofolate + H(+). The protein operates within one-carbon metabolism; tetrahydrofolate interconversion. Functionally, catalyzes the oxidation of 5,10-methylenetetrahydrofolate to 5,10-methenyltetrahydrofolate and then the hydrolysis of 5,10-methenyltetrahydrofolate to 10-formyltetrahydrofolate. This chain is Bifunctional protein FolD, found in Pseudomonas entomophila (strain L48).